We begin with the raw amino-acid sequence, 444 residues long: Argininosuccinate synthase (444 aa).

Residues 17-25 (AFSGGLDTS) and Ala43 each bind ATP. Tyr99 provides a ligand contact to L-citrulline. Residues Gly129 and Thr131 each coordinate ATP. Residues Thr131, Asn135, and Asp136 each coordinate L-aspartate. Asn135 provides a ligand contact to L-citrulline. Asp136 serves as a coordination point for ATP. L-citrulline is bound by residues Arg139 and Ser192. Asp194 contacts ATP. The L-citrulline site is built by Thr201, Glu203, and Glu280.

The protein belongs to the argininosuccinate synthase family. Type 2 subfamily. Homotetramer.

It is found in the cytoplasm. The enzyme catalyses L-citrulline + L-aspartate + ATP = 2-(N(omega)-L-arginino)succinate + AMP + diphosphate + H(+). It participates in amino-acid biosynthesis; L-arginine biosynthesis; L-arginine from L-ornithine and carbamoyl phosphate: step 2/3. This is Argininosuccinate synthase from Paraburkholderia phymatum (strain DSM 17167 / CIP 108236 / LMG 21445 / STM815) (Burkholderia phymatum).